The following is a 476-amino-acid chain: Growth/differentiation factor 10 (476 aa).

An N-terminal signal peptide occupies residues 1–29 (MAPGLARISLRSQLLPLVPLLLLLRGAGC). The propeptide occupies 30-366 (GHRVPSWSSL…EKTMQKARRR (337 aa)). 3 N-linked (GlcNAc...) asparagine glycosylation sites follow: N114, N152, and N277. Disordered stretches follow at residues 268–305 (GDFE…LDER) and 330–358 (PRTG…FDEK). Cystine bridges form between C374–C441, C403–C473, and C407–C475. An N-linked (GlcNAc...) asparagine glycan is attached at N467.

The protein belongs to the TGF-beta family. Homodimer or heterodimer. Can form a non-covalent complex of the mature region and the pro-region. Costa, costicartilage, femur, calvaria, trachea, aorta and brain. Predominantly in the cerebellum.

It localises to the secreted. Growth factor involved in osteogenesis and adipogenesis. Plays an inhibitory role in the process of osteoblast differentiation via SMAD2/3 pathway. Plays an inhibitory role in the process of adipogenesis. This Rattus norvegicus (Rat) protein is Growth/differentiation factor 10.